The sequence spans 158 residues: Transcription elongation factor GreA (158 aa).

Belongs to the GreA/GreB family.

In terms of biological role, necessary for efficient RNA polymerase transcription elongation past template-encoded arresting sites. The arresting sites in DNA have the property of trapping a certain fraction of elongating RNA polymerases that pass through, resulting in locked ternary complexes. Cleavage of the nascent transcript by cleavage factors such as GreA or GreB allows the resumption of elongation from the new 3'terminus. GreA releases sequences of 2 to 3 nucleotides. The sequence is that of Transcription elongation factor GreA from Acinetobacter baumannii (strain SDF).